A 421-amino-acid polypeptide reads, in one-letter code: Alpha-1-antiproteinase 2 (421 aa).

A signal peptide spans 1-24; sequence MPSSVPWCLLLLAGLCCLVPSSLA. 3 N-linked (GlcNAc...) asparagine glycosylation sites follow: Asn-73, Asn-110, and Asn-274. An RCL region spans residues 376 to 395; sequence GTTMWEIMPISLPPDLKFNR.

The protein belongs to the serpin family. N-glycosylated with carbohydrates having biantennary side chains. Plasma.

It is found in the secreted. Inhibitor of serine proteases. The chain is Alpha-1-antiproteinase 2 from Equus caballus (Horse).